Here is a 297-residue protein sequence, read N- to C-terminus: MGVVESITNSTKPGVTKKSSPEAEDDSNGEASTCGRILIFLSWVLVVLTMPFSLLVCFKVVQEYERAVIFRLGRLVQGGAKGPGIFFILPCIDAYARVDLRTRTYDVPPQEVLTKDSVTVSVDAVVYYRVSNATVSIANVENAHHSTRLLAQTTLRNTMGTRHLHEILSERMTISGSMQLSLDEATEAWGIKVERVEIKDVRLPVQLQRAMAAEAEAAREARAKVIAAEGEQKASRALREASEVIGDSPAALQLRYLQTLNTISAEKNSTIVFPLPIDILTYFMKSKESYEASHSHS.

Over residues 1-13 (MGVVESITNSTKP) the composition is skewed to polar residues. Positions 1–30 (MGVVESITNSTKPGVTKKSSPEAEDDSNGE) are disordered. A helical transmembrane segment spans residues 37–57 (ILIFLSWVLVVLTMPFSLLVC).

Belongs to the band 7/mec-2 family.

The protein resides in the membrane. This Aedes aegypti (Yellowfever mosquito) protein is Band 7 protein AAEL010189.